The chain runs to 491 residues: ATP synthase subunit beta, chloroplastic (491 aa).

Glycine 163–threonine 170 serves as a coordination point for ATP.

It belongs to the ATPase alpha/beta chains family. As to quaternary structure, F-type ATPases have 2 components, CF(1) - the catalytic core - and CF(0) - the membrane proton channel. CF(1) has five subunits: alpha(3), beta(3), gamma(1), delta(1), epsilon(1). CF(0) has four main subunits: a(1), b(1), b'(1) and c(9-12).

It is found in the plastid. Its subcellular location is the chloroplast thylakoid membrane. The catalysed reaction is ATP + H2O + 4 H(+)(in) = ADP + phosphate + 5 H(+)(out). Its function is as follows. Produces ATP from ADP in the presence of a proton gradient across the membrane. The catalytic sites are hosted primarily by the beta subunits. In Nephroselmis olivacea (Green alga), this protein is ATP synthase subunit beta, chloroplastic.